The primary structure comprises 78 residues: Protein Vpr (78 aa).

A homooligomerization region spans residues 1–42; it reads MEQAPEDQGPQREPHNEWTLELLEELKNEAVRHFPRIWLHGL.

It belongs to the HIV-1 VPR protein family. Homooligomer, may form homodimer. Interacts with p6-gag region of the Pr55 Gag precursor protein through a (Leu-X-X)4 motif near the C-terminus of the P6gag protein. Interacts with host UNG. May interact with host RAD23A/HHR23A. Interacts with host VPRBP/DCAF1, leading to hijack the CUL4A-RBX1-DDB1-DCAF1/VPRBP complex, mediating ubiquitination of host proteins such as TERT and ZGPAT and arrest of the cell cycle in G2 phase. Post-translationally, phosphorylated on several residues by host. These phosphorylations regulate VPR activity for the nuclear import of the HIV-1 pre-integration complex.

The protein localises to the virion. It localises to the host nucleus. The protein resides in the host extracellular space. In terms of biological role, during virus replication, may deplete host UNG protein, and incude G2-M cell cycle arrest. Acts by targeting specific host proteins for degradation by the 26S proteasome, through association with the cellular CUL4A-DDB1 E3 ligase complex by direct interaction with host VPRPB/DCAF-1. Cell cycle arrest reportedly occurs within hours of infection and is not blocked by antiviral agents, suggesting that it is initiated by the VPR carried into the virion. Additionally, VPR induces apoptosis in a cell cycle dependent manner suggesting that these two effects are mechanistically linked. Detected in the serum and cerebrospinal fluid of AIDS patient, VPR may also induce cell death to bystander cells. Its function is as follows. During virus entry, plays a role in the transport of the viral pre-integration (PIC) complex to the host nucleus. This function is crucial for viral infection of non-dividing macrophages. May act directly at the nuclear pore complex, by binding nucleoporins phenylalanine-glycine (FG)-repeat regions. The sequence is that of Protein Vpr from Human immunodeficiency virus type 1 group M subtype B (isolate PCV12) (HIV-1).